The following is a 350-amino-acid chain: Phosphoribosylformylglycinamidine cyclo-ligase (350 aa).

It belongs to the AIR synthase family.

The protein resides in the cytoplasm. The catalysed reaction is 2-formamido-N(1)-(5-O-phospho-beta-D-ribosyl)acetamidine + ATP = 5-amino-1-(5-phospho-beta-D-ribosyl)imidazole + ADP + phosphate + H(+). It functions in the pathway purine metabolism; IMP biosynthesis via de novo pathway; 5-amino-1-(5-phospho-D-ribosyl)imidazole from N(2)-formyl-N(1)-(5-phospho-D-ribosyl)glycinamide: step 2/2. The chain is Phosphoribosylformylglycinamidine cyclo-ligase from Cupriavidus metallidurans (strain ATCC 43123 / DSM 2839 / NBRC 102507 / CH34) (Ralstonia metallidurans).